The primary structure comprises 379 residues: Succinyl-diaminopimelate desuccinylase (379 aa).

Zn(2+) is bound at residue histidine 70. Residue aspartate 72 is part of the active site. Aspartate 103 is a binding site for Zn(2+). The active-site Proton acceptor is glutamate 137. Positions 138, 166, and 352 each coordinate Zn(2+).

It belongs to the peptidase M20A family. DapE subfamily. In terms of assembly, homodimer. It depends on Zn(2+) as a cofactor. The cofactor is Co(2+).

It carries out the reaction N-succinyl-(2S,6S)-2,6-diaminopimelate + H2O = (2S,6S)-2,6-diaminopimelate + succinate. Its pathway is amino-acid biosynthesis; L-lysine biosynthesis via DAP pathway; LL-2,6-diaminopimelate from (S)-tetrahydrodipicolinate (succinylase route): step 3/3. Its function is as follows. Catalyzes the hydrolysis of N-succinyl-L,L-diaminopimelic acid (SDAP), forming succinate and LL-2,6-diaminopimelate (DAP), an intermediate involved in the bacterial biosynthesis of lysine and meso-diaminopimelic acid, an essential component of bacterial cell walls. The sequence is that of Succinyl-diaminopimelate desuccinylase from Burkholderia multivorans (strain ATCC 17616 / 249).